A 1212-amino-acid chain; its full sequence is Probable serine/threonine-protein kinase DDB_G0284491 (1212 aa).

A helical transmembrane segment spans residues 197–217; that stretch reads LFHSFSLLNLYVYLIIVIRII. N-linked (GlcNAc...) asparagine glycosylation is found at Asn-229, Asn-299, Asn-309, Asn-328, Asn-335, Asn-341, Asn-344, Asn-391, Asn-419, Asn-422, Asn-426, Asn-427, Asn-435, and Asn-499. Positions 288 to 329 are disordered; it reads LNNNNDNNLNNNNSNNNLNNNNNSNSNFNNDNNLNSNINSND. Disordered stretches follow at residues 412–439 and 489–517; these read GNSNSGSNNSNSSNNNSSSNSLINNSGG and IIKNNNNNNNNNSNNNNNNNDEDDSDYEE. Residues 489–507 are compositionally biased toward low complexity; sequence IIKNNNNNNNNNSNNNNNN. The segment covering 508–517 has biased composition (acidic residues); that stretch reads NDEDDSDYEE. Residues 673–693 traverse the membrane as a helical segment; it reads IQIFDDYSLIIALRLLMNFIL. Positions 703–720 are enriched in pro residues; the sequence is VPPPPTQPSSRPQSPPTV. 2 disordered regions span residues 703–733 and 751–813; these read VPPPPTQPSSRPQSPPTVSPLTPLNNHHHSG and EVVS…NNNN. The Protein kinase domain occupies 865 to 1182; sequence ETEIEPFASG…EVYNDLQDIY (318 aa). ATP contacts are provided by residues 871-879 and Lys-924; that span reads FASGGQANI. The active-site Proton acceptor is the Asp-1035.

This sequence belongs to the protein kinase superfamily. Ser/Thr protein kinase family.

Its subcellular location is the membrane. The catalysed reaction is L-seryl-[protein] + ATP = O-phospho-L-seryl-[protein] + ADP + H(+). It carries out the reaction L-threonyl-[protein] + ATP = O-phospho-L-threonyl-[protein] + ADP + H(+). The chain is Probable serine/threonine-protein kinase DDB_G0284491 from Dictyostelium discoideum (Social amoeba).